Here is a 227-residue protein sequence, read N- to C-terminus: Thymidylate kinase (227 aa).

7–14 (GIEGSGKT) contacts ATP.

It belongs to the thymidylate kinase family.

It carries out the reaction dTMP + ATP = dTDP + ADP. In terms of biological role, phosphorylation of dTMP to form dTDP in both de novo and salvage pathways of dTTP synthesis. The sequence is that of Thymidylate kinase from Desulforapulum autotrophicum (strain ATCC 43914 / DSM 3382 / VKM B-1955 / HRM2) (Desulfobacterium autotrophicum).